The primary structure comprises 340 residues: Phosphoribosylformylglycinamidine cyclo-ligase (340 aa).

It belongs to the AIR synthase family.

It localises to the cytoplasm. It carries out the reaction 2-formamido-N(1)-(5-O-phospho-beta-D-ribosyl)acetamidine + ATP = 5-amino-1-(5-phospho-beta-D-ribosyl)imidazole + ADP + phosphate + H(+). It functions in the pathway purine metabolism; IMP biosynthesis via de novo pathway; 5-amino-1-(5-phospho-D-ribosyl)imidazole from N(2)-formyl-N(1)-(5-phospho-D-ribosyl)glycinamide: step 2/2. The sequence is that of Phosphoribosylformylglycinamidine cyclo-ligase from Streptococcus pneumoniae serotype 2 (strain D39 / NCTC 7466).